A 277-amino-acid polypeptide reads, in one-letter code: Probable redox regulatory protein ML2435 (277 aa).

The protein belongs to the Rv0495c family.

In terms of biological role, essential for maintaining intracellular redox homeostasis. The polypeptide is Probable redox regulatory protein ML2435 (Mycobacterium leprae (strain TN)).